The chain runs to 489 residues: Homoserine O-acetyltransferase (489 aa).

Residues 69–438 (LLLCHALSGS…AEGHDGFLLE (370 aa)) form the AB hydrolase-1 domain. The active-site Nucleophile is the Ser-163. The interval 255–329 (ASRHPYPDRL…QTTDSSSLNQ (75 aa)) is disordered. The span at 280 to 290 (EGNRNRRERPC) shows a compositional bias: basic and acidic residues. A compositionally biased stretch (low complexity) spans 299-329 (SESALNSPASSVSSLPSLGASQTTDSSSLNQ). Active-site residues include Asp-403 and His-432.

This sequence belongs to the AB hydrolase superfamily. MetX family.

It is found in the cytoplasm. It carries out the reaction L-homoserine + acetyl-CoA = O-acetyl-L-homoserine + CoA. The protein operates within amino-acid biosynthesis; L-methionine biosynthesis via de novo pathway; O-acetyl-L-homoserine from L-homoserine: step 1/1. Functionally, commits homoserine to the methionine biosynthesis pathway by catalyzing its O-acetylation. In Schizosaccharomyces pombe (strain 972 / ATCC 24843) (Fission yeast), this protein is Homoserine O-acetyltransferase (met6).